A 225-amino-acid polypeptide reads, in one-letter code: MVSHSELRNLFCSADAVCFDVDSTVIQEEGIDELAKFCGVEDAVSEMTRQAMGGAVPFKAALTQRLALIQPSREQVQRLLAEHPPHLTPGIRELVSRLQERNVQVFLISGGFRSIVEHVASKLNIPSTNVFANRLKFYFNGEYAGFDETQPTAESGGKGKVIKLLKEKFHFKKIVMVGDGATDMEACPPADAFIGFGGNVIRQQVKDNAEWYITDFVELLGALEE.

Met1 is subject to N-acetylmethionine. The active-site Nucleophile is Asp20. Mg(2+) contacts are provided by Asp20 and Asp22. Residue 20–22 (DVD) participates in L-serine binding. The active-site Proton donor is Asp22. O-phospho-L-serine is bound at residue Met52. Gly53 serves as a coordination point for phosphate. L-serine contacts are provided by residues 109-111 (SGG) and Lys158. Residues 109-111 (SGG) and Lys158 contribute to the O-phospho-L-serine site. Asp179 is a Mg(2+) binding site. Residue Thr182 participates in O-phospho-L-serine binding. Phosphate is bound at residue Thr182.

It belongs to the HAD-like hydrolase superfamily. SerB family. In terms of assembly, homodimer. Mg(2+) is required as a cofactor.

It is found in the cytoplasm. The protein resides in the cytosol. The catalysed reaction is O-phospho-L-serine + H2O = L-serine + phosphate. It carries out the reaction O-phospho-D-serine + H2O = D-serine + phosphate. It participates in amino-acid biosynthesis; L-serine biosynthesis; L-serine from 3-phospho-D-glycerate: step 3/3. Its function is as follows. Catalyzes the last irreversible step in the biosynthesis of L-serine from carbohydrates, the dephosphorylation of O-phospho-L-serine to L-serine. L-serine can then be used in protein synthesis, to produce other amino acids, in nucleotide metabolism or in glutathione synthesis, or can be racemized to D-serine, a neuromodulator. May also act on O-phospho-D-serine. This is Phosphoserine phosphatase from Bos taurus (Bovine).